A 146-amino-acid chain; its full sequence is Angiogenin (146 aa).

The N-terminal stretch at 1 to 24 (MAMSLCPLLLVFVLGLGLTPPSLA) is a signal peptide. Gln25 is modified (pyrrolidone carboxylic acid). The Proton acceptor role is filled by His37. TRNA is bound at residue Arg45. Cystine bridges form between Cys50–Cys105, Cys63–Cys116, and Cys81–Cys131. Residues 55-59 (VRRHL) carry the Nucleolar localization signal motif. TRNA-binding residues include Cys105 and Ile127. The active-site Proton donor is the His138.

Belongs to the pancreatic ribonuclease family. As to quaternary structure, homodimer. Interacts with RNH1; inhibiting ANG ribonuclease activity. Interacts with PCNA.

Its subcellular location is the secreted. It is found in the nucleus. It localises to the nucleolus. The protein resides in the cytoplasm. The protein localises to the stress granule. With respect to regulation, has weak tRNA ribonuclease activity by itself due to partial autoinhibition by its C-terminus, which folds into a short alpha-helix that partially occludes the substrate-binding site. In absence of stress, the ribonuclease activity is inhibited by RNH1 in the cytoplasm. In response to stress, dissociates from RNH1 in the cytoplasm and associates with cytoplasmic ribosomes with vacant A-sites: ribosomes directly activate the tRNA ribonuclease activity of ANG by refolding the C-terminal alpha-helix. In response to stress, the angiogenic activity of ANG is inhibited by RNH1 in the nucleus. Its function is as follows. Secreted ribonuclease that can either promote or restrict cell proliferation of target cells, depending on the context. Endocytosed in target cells via its receptor PLXNB2 and translocates to the cytoplasm or nucleus. Under stress conditions, localizes to the cytoplasm and promotes the assembly of stress granules (SGs): specifically cleaves a subset of tRNAs within anticodon loops to produce tRNA-derived stress-induced fragments (tiRNAs), resulting in translation repression and inhibition of cell proliferation. tiRNas also prevent formation of apoptosome, thereby promoting cell survival. Preferentially cleaves RNAs between a pyrimidine and an adenosine residue, suggesting that it cleaves the anticodon loop of tRNA(Ala) (32-UUAGCAU-38) after positions 33 and 36. Cleaves a subset of tRNAs, including tRNA(Ala), tRNA(Glu), tRNA(Gly), tRNA(Lys), tRNA(Val), tRNA(His), tRNA(Asp) and tRNA(Sec). Under growth conditions and in differentiated cells, translocates to the nucleus and stimulates ribosomal RNA (rRNA) transcription, including that containing the initiation site sequences of 45S rRNA, thereby promoting cell growth and proliferation. Angiogenin induces vascularization of normal and malignant tissues via its ability to promote rRNA transcription. Involved in hematopoietic stem and progenitor cell (HSPC) growth and survival by promoting rRNA transcription in growth conditions and inhibiting translation in response to stress, respectively. Mediates the crosstalk between myeloid and intestinal epithelial cells to protect the intestinal epithelial barrier integrity: secreted by myeloid cells and promotes intestinal epithelial cells proliferation and survival. Also mediates osteoclast-endothelial cell crosstalk in growing bone: produced by osteoclasts and protects the neighboring vascular cells against senescence by promoting rRNA transcription. This is Angiogenin (ANG) from Equus caballus (Horse).